A 133-amino-acid polypeptide reads, in one-letter code: Ribosome-binding factor A (133 aa).

This sequence belongs to the RbfA family. Monomer. Binds 30S ribosomal subunits, but not 50S ribosomal subunits or 70S ribosomes.

It is found in the cytoplasm. Its function is as follows. One of several proteins that assist in the late maturation steps of the functional core of the 30S ribosomal subunit. Associates with free 30S ribosomal subunits (but not with 30S subunits that are part of 70S ribosomes or polysomes). Required for efficient processing of 16S rRNA. May interact with the 5'-terminal helix region of 16S rRNA. The sequence is that of Ribosome-binding factor A from Pseudomonas fluorescens (strain Pf0-1).